Consider the following 573-residue polypeptide: MKLTQYYLPTLKEAPKDADTISAKLMLRAGLIRKTASGIYEWLPLGLKVLKKVEQIVREEMDAAGAHEVWLPLIQPKELWEESGRWTYYGKELLRIKDRKGAEFCFAPTAEEVITDVVRRDVTSYKQLPVALYQFASKFRDEIRPRFGVMRAREFYMKDAYSFHATEESINEWYLKFFEAYKKVCTRCGFKFKAVEADTGAIGGNFSHEFMVLADTGENEIADCDCGYAANTEKAEIFKPKFPAAKEELKTIEKVNTPNATTIEDVAKMLGQTADRFIKLLVFTADGQPVVALMRGDHELNEHKLKALLKAQELEKANEETYAKVTGSFVGYAGPVGLKEKNPKIKLFADYHVAGIVNGIAGGNEKDVHIINVTPSRDFTPDVYADLKIASEGDLCGKCGKKFNFTRGIEVGHTFKLGTKYSQSMKAEFLDENQKSHPFLMGCYGIGISRIVAAAIEQSHDENGIIWPAPLAPFDIYLVSIDTDINPKVKEETDSIYNQLTQAGLNVLLDDRNERPGIKFKDADLIGLPHRIVISSRTVETGEYEYKQRTSKEAIRRKLADISEQIKEFQASK.

Belongs to the class-II aminoacyl-tRNA synthetase family. ProS type 1 subfamily. As to quaternary structure, homodimer.

The protein resides in the cytoplasm. It carries out the reaction tRNA(Pro) + L-proline + ATP = L-prolyl-tRNA(Pro) + AMP + diphosphate. In terms of biological role, catalyzes the attachment of proline to tRNA(Pro) in a two-step reaction: proline is first activated by ATP to form Pro-AMP and then transferred to the acceptor end of tRNA(Pro). As ProRS can inadvertently accommodate and process non-cognate amino acids such as alanine and cysteine, to avoid such errors it has two additional distinct editing activities against alanine. One activity is designated as 'pretransfer' editing and involves the tRNA(Pro)-independent hydrolysis of activated Ala-AMP. The other activity is designated 'posttransfer' editing and involves deacylation of mischarged Ala-tRNA(Pro). The misacylated Cys-tRNA(Pro) is not edited by ProRS. The chain is Proline--tRNA ligase from Elusimicrobium minutum (strain Pei191).